A 292-amino-acid chain; its full sequence is Acetylglutamate kinase (292 aa).

Substrate is bound by residues G64–G65, R86, and N190.

Belongs to the acetylglutamate kinase family. ArgB subfamily.

It localises to the cytoplasm. The enzyme catalyses N-acetyl-L-glutamate + ATP = N-acetyl-L-glutamyl 5-phosphate + ADP. It participates in amino-acid biosynthesis; L-arginine biosynthesis; N(2)-acetyl-L-ornithine from L-glutamate: step 2/4. Functionally, catalyzes the ATP-dependent phosphorylation of N-acetyl-L-glutamate. The polypeptide is Acetylglutamate kinase (Geotalea uraniireducens (strain Rf4) (Geobacter uraniireducens)).